Consider the following 118-residue polypeptide: Large ribosomal subunit protein uL18 (118 aa).

Belongs to the universal ribosomal protein uL18 family. In terms of assembly, part of the 50S ribosomal subunit; part of the 5S rRNA/L5/L18/L25 subcomplex. Contacts the 5S and 23S rRNAs.

Its function is as follows. This is one of the proteins that bind and probably mediate the attachment of the 5S RNA into the large ribosomal subunit, where it forms part of the central protuberance. The sequence is that of Large ribosomal subunit protein uL18 from Sulfurovum sp. (strain NBC37-1).